Consider the following 730-residue polypeptide: Elongation factor 2 (730 aa).

One can recognise a tr-type G domain in the interval 19–229; the sequence is DYIRNIGIVA…NITFKDIIQY (211 aa). GTP is bound by residues 28 to 35, 94 to 98, and 148 to 151; these read AHIDHGKT, DTPGH, and NKVD. Position 597 is a diphthamide (histidine 597).

This sequence belongs to the TRAFAC class translation factor GTPase superfamily. Classic translation factor GTPase family. EF-G/EF-2 subfamily.

It localises to the cytoplasm. Functionally, catalyzes the GTP-dependent ribosomal translocation step during translation elongation. During this step, the ribosome changes from the pre-translocational (PRE) to the post-translocational (POST) state as the newly formed A-site-bound peptidyl-tRNA and P-site-bound deacylated tRNA move to the P and E sites, respectively. Catalyzes the coordinated movement of the two tRNA molecules, the mRNA and conformational changes in the ribosome. This Methanosphaera stadtmanae (strain ATCC 43021 / DSM 3091 / JCM 11832 / MCB-3) protein is Elongation factor 2.